We begin with the raw amino-acid sequence, 506 residues long: MTPVVALVGRPNVGKSTLFNRLTRTRDALVADFPGLTRDRKYGHANIAGYDFIVIDTGGIDGTEEGVEEKMAEQSLLAIEEADVVLFLVDARAGLVPADIGIAQYLRQREKTTVVVANKTDGIDADSHCAEFYQLGLGEVEQIAAAQGRGVTQLIDQVLAPLGEQLNADQAVENEENSANEEADEWDTDFDFENEDDTALLDEALEEETEESIEDKNIKIAIVGRPNVGKSTLTNRILGEERVVVYDMPGTTRDSIYIPMERDGQQYTIIDTAGVRKRGKVNLAVEKFSVIKTLQAIQDANVVLLTIDAREGISDQDLSLLGFILNAGRSLVIVVNKWDGLSQDIKDQVKSELDRRLDFIDFARVHFISALHGSGVGNLFDSVKEAYACATQKNSTSMLTRILRMAADEHQPPLVNGRRVKLKYAHPGGYNPPIIVIHGNQVEKLADSYKRYLSNYFRKSLKIIGSPIRIQFQEGNNPFAGKKNKLTPSQLRKRKRLMKFIKKSKK.

EngA-type G domains lie at 3–166 and 218–391; these read PVVA…GEQL and IKIA…ACAT. GTP-binding positions include 9-16, 56-60, 118-121, 224-231, 271-275, and 336-339; these read GRPNVGKS, DTGGI, NKTD, DTAGV, and NKWD. Residues 392-476 form the KH-like domain; the sequence is QKNSTSMLTR…PIRIQFQEGN (85 aa).

The protein belongs to the TRAFAC class TrmE-Era-EngA-EngB-Septin-like GTPase superfamily. EngA (Der) GTPase family. As to quaternary structure, associates with the 50S ribosomal subunit.

Functionally, GTPase that plays an essential role in the late steps of ribosome biogenesis. The sequence is that of GTPase Der from Actinobacillus pleuropneumoniae serotype 7 (strain AP76).